The primary structure comprises 426 residues: tRNA(Met) cytidine acetate ligase (426 aa).

ATP contacts are provided by residues 7-20, Gly101, Asn168, and Arg193; that span reads VVEYNPFHNGHLFH.

This sequence belongs to the TmcAL family.

Its subcellular location is the cytoplasm. The enzyme catalyses cytidine(34) in elongator tRNA(Met) + acetate + ATP = N(4)-acetylcytidine(34) in elongator tRNA(Met) + AMP + diphosphate. Functionally, catalyzes the formation of N(4)-acetylcytidine (ac(4)C) at the wobble position of elongator tRNA(Met), using acetate and ATP as substrates. First activates an acetate ion to form acetyladenylate (Ac-AMP) and then transfers the acetyl group to tRNA to form ac(4)C34. The chain is tRNA(Met) cytidine acetate ligase from Kosmotoga olearia (strain ATCC BAA-1733 / DSM 21960 / TBF 19.5.1).